A 327-amino-acid chain; its full sequence is Neurogenic differentiation factor 6-A (327 aa).

The disordered stretch occupies residues 17-85; sequence GANFPRDCVG…KKMTKARVDR (69 aa). A compositionally biased stretch (basic and acidic residues) spans 24–46; that stretch reads CVGDLKGNKQEPFEKEETLSHVM. Acidic residues predominate over residues 47–63; that stretch reads DDDDSEKDEDEREDGQD. A compositionally biased stretch (basic residues) spans 68-80; it reads PRRRGPRKKKMTK. Positions 74–80 match the Nuclear localization signal motif; the sequence is RKKKMTK. Residues 88-140 form the bHLH domain; sequence VRRMEANARERNRMHGLNNALDSLRKVVPCYSKTQKLSKIETLRLAKNYIWAL.

In terms of assembly, efficient DNA binding requires dimerization with another bHLH protein. As to expression, embryonic olfactory bulbs. In adult, expressed in brain, eye, intestine, muscle, ovary and skin.

The protein localises to the nucleus. Differentiation factor required for neurogenesis. Acts as an upstream activator of isl1. This is Neurogenic differentiation factor 6-A from Danio rerio (Zebrafish).